The following is a 458-amino-acid chain: Probable ECA polymerase (458 aa).

11 helical membrane passes run Leu3–Leu23, Val37–Leu57, Val65–Tyr85, Thr112–Leu132, Gly154–Leu174, Ala180–Gly200, Gly201–Gly221, Trp222–Leu242, Leu340–Ile360, Tyr377–Ala397, and Val409–Phe429.

Belongs to the WzyE family. As to quaternary structure, probably part of a complex composed of WzxE, WzyE and WzzE.

It is found in the cell inner membrane. It functions in the pathway bacterial outer membrane biogenesis; enterobacterial common antigen biosynthesis. In terms of biological role, probably involved in the polymerization of enterobacterial common antigen (ECA) trisaccharide repeat units. The protein is Probable ECA polymerase of Serratia proteamaculans (strain 568).